We begin with the raw amino-acid sequence, 326 residues long: Protein FAM50 homolog (326 aa).

The tract at residues I77–H111 is disordered. Over residues D97–A109 the composition is skewed to basic and acidic residues.

This sequence belongs to the FAM50 family.

The sequence is that of Protein FAM50 homolog from Caenorhabditis elegans.